The chain runs to 197 residues: Holliday junction branch migration complex subunit RuvA (197 aa).

The tract at residues 1-64 (MIGHLEGRLR…EDAIQLYGFR (64 aa)) is domain I. Residues 65-143 (TVAEKDMFLR…VKKGREAEQP (79 aa)) form a domain II region. The flexible linker stretch occupies residues 144–145 (AP). The interval 146 to 197 (AAESSYGDAYSALVNLGYRPAEAEKALGKAIKSLGADPPVEKLLKETLRLLA) is domain III.

Belongs to the RuvA family. As to quaternary structure, homotetramer. Forms an RuvA(8)-RuvB(12)-Holliday junction (HJ) complex. HJ DNA is sandwiched between 2 RuvA tetramers; dsDNA enters through RuvA and exits via RuvB. An RuvB hexamer assembles on each DNA strand where it exits the tetramer. Each RuvB hexamer is contacted by two RuvA subunits (via domain III) on 2 adjacent RuvB subunits; this complex drives branch migration. In the full resolvosome a probable DNA-RuvA(4)-RuvB(12)-RuvC(2) complex forms which resolves the HJ.

It is found in the cytoplasm. In terms of biological role, the RuvA-RuvB-RuvC complex processes Holliday junction (HJ) DNA during genetic recombination and DNA repair, while the RuvA-RuvB complex plays an important role in the rescue of blocked DNA replication forks via replication fork reversal (RFR). RuvA specifically binds to HJ cruciform DNA, conferring on it an open structure. The RuvB hexamer acts as an ATP-dependent pump, pulling dsDNA into and through the RuvAB complex. HJ branch migration allows RuvC to scan DNA until it finds its consensus sequence, where it cleaves and resolves the cruciform DNA. The sequence is that of Holliday junction branch migration complex subunit RuvA from Syntrophobacter fumaroxidans (strain DSM 10017 / MPOB).